The primary structure comprises 361 residues: Mitogen-activated protein kinase 14A (361 aa).

One can recognise a Protein kinase domain in the interval 25 to 309; it reads YQNLSPVGSG…AAEALAHPYF (285 aa). ATP contacts are provided by residues 31-39 and lysine 54; that span reads VGSGAYGTV. Aspartate 151 (proton acceptor) is an active-site residue. Threonine 181 carries the post-translational modification Phosphothreonine; by MAP2K6. The TXY signature appears at 181–183; that stretch reads TGY. Tyrosine 183 is modified (phosphotyrosine; by MAP2K6).

The protein belongs to the protein kinase superfamily. CMGC Ser/Thr protein kinase family. MAP kinase subfamily. It depends on Mg(2+) as a cofactor. Post-translationally, dually phosphorylated on Thr-181 and Tyr-183, which activates the enzyme. Exclusively expressed in the ovary.

The protein resides in the cytoplasm. The protein localises to the nucleus. The enzyme catalyses L-seryl-[protein] + ATP = O-phospho-L-seryl-[protein] + ADP + H(+). The catalysed reaction is L-threonyl-[protein] + ATP = O-phospho-L-threonyl-[protein] + ADP + H(+). Activated by threonine and tyrosine phosphorylation by the dual specificity kinase, MKK6. Its function is as follows. Serine/threonine kinase which acts as an essential component of the MAP kinase signal transduction pathway. Mapk14a is one of the four p38 MAPKs which play an important role in the cascades of cellular responses evoked by extracellular stimuli such as pro-inflammatory cytokines or physical stress leading to direct activation of transcription factors. Accordingly, p38 MAPKs phosphorylate a broad range of proteins and it has been estimated that they may have approximately 200 to 300 substrates each. Some of the targets are downstream kinases which are activated through phosphorylation and further phosphorylate additional targets. The sequence is that of Mitogen-activated protein kinase 14A (mapk14a) from Cyprinus carpio (Common carp).